A 387-amino-acid polypeptide reads, in one-letter code: Probable peptidoglycan glycosyltransferase FtsW (387 aa).

9 consecutive transmembrane segments (helical) span residues 19-39, 61-81, 86-106, 118-138, 161-181, 199-219, 286-306, 320-340, and 352-372; these read LDFS…VMVA, ITFL…PMSV, SGLL…PGIG, LGPF…VYFA, VLLI…SVVI, FLLL…ASPY, FIGA…LVIL, YVVF…MGVA, and PFIS…ALVF.

Belongs to the SEDS family. FtsW subfamily.

Its subcellular location is the cell inner membrane. It catalyses the reaction [GlcNAc-(1-&gt;4)-Mur2Ac(oyl-L-Ala-gamma-D-Glu-L-Lys-D-Ala-D-Ala)](n)-di-trans,octa-cis-undecaprenyl diphosphate + beta-D-GlcNAc-(1-&gt;4)-Mur2Ac(oyl-L-Ala-gamma-D-Glu-L-Lys-D-Ala-D-Ala)-di-trans,octa-cis-undecaprenyl diphosphate = [GlcNAc-(1-&gt;4)-Mur2Ac(oyl-L-Ala-gamma-D-Glu-L-Lys-D-Ala-D-Ala)](n+1)-di-trans,octa-cis-undecaprenyl diphosphate + di-trans,octa-cis-undecaprenyl diphosphate + H(+). Its pathway is cell wall biogenesis; peptidoglycan biosynthesis. Its function is as follows. Peptidoglycan polymerase that is essential for cell division. The chain is Probable peptidoglycan glycosyltransferase FtsW from Saccharophagus degradans (strain 2-40 / ATCC 43961 / DSM 17024).